The chain runs to 329 residues: Cathepsin K (329 aa).

Residues 1 to 15 (MWGLKVLLLPVVSFA) form the signal peptide. Residues 16–114 (LHPEEILDTQ…TLYIPDWEGR (99 aa)) constitute a propeptide, activation peptide. The N-linked (GlcNAc...) asparagine glycan is linked to asparagine 103. Cystine bridges form between cysteine 136–cysteine 177 and cysteine 170–cysteine 210. Cysteine 139 is a catalytic residue. N-linked (GlcNAc...) asparagine glycosylation is present at asparagine 268. Cysteines 269 and 318 form a disulfide. Catalysis depends on residues histidine 276 and asparagine 296.

Belongs to the peptidase C1 family. In terms of tissue distribution, predominantly expressed in osteclasts (bones).

It localises to the lysosome. It is found in the secreted. The protein resides in the apical cell membrane. It carries out the reaction Broad proteolytic activity. With small-molecule substrates and inhibitors, the major determinant of specificity is P2, which is preferably Leu, Met &gt; Phe, and not Arg.. Functionally, thiol protease involved in osteoclastic bone resorption and may participate partially in the disorder of bone remodeling. Displays potent endoprotease activity against fibrinogen at acid pH. May play an important role in extracellular matrix degradation. Involved in the release of thyroid hormone thyroxine (T4) by limited proteolysis of TG/thyroglobulin in the thyroid follicle lumen. In Oryctolagus cuniculus (Rabbit), this protein is Cathepsin K (CTSK).